Reading from the N-terminus, the 243-residue chain is Probable transcriptional regulatory protein LSEI_1022 (243 aa).

Positions 1–23 (MSGHSKWHNIQGRKNAQDSKRGK) are disordered.

It belongs to the TACO1 family.

It localises to the cytoplasm. The chain is Probable transcriptional regulatory protein LSEI_1022 from Lacticaseibacillus paracasei (strain ATCC 334 / BCRC 17002 / CCUG 31169 / CIP 107868 / KCTC 3260 / NRRL B-441) (Lactobacillus paracasei).